A 124-amino-acid polypeptide reads, in one-letter code: uncharacterized protein (124 aa).

This is an uncharacterized protein from Schizosaccharomyces pombe (strain 972 / ATCC 24843) (Fission yeast).